The sequence spans 127 residues: Anti-adapter protein IraD (127 aa).

It belongs to the GpW/Gp25 family. IraD subfamily. As to quaternary structure, interacts with RssB.

It localises to the cytoplasm. Inhibits RpoS proteolysis by regulating RssB activity, thereby increasing the stability of the sigma stress factor RpoS during oxidative stress. Its effect on RpoS stability is due to its interaction with RssB, which probably blocks the interaction of RssB with RpoS, and the consequent delivery of the RssB-RpoS complex to the ClpXP protein degradation pathway. In Escherichia coli O6:K15:H31 (strain 536 / UPEC), this protein is Anti-adapter protein IraD.